A 229-amino-acid polypeptide reads, in one-letter code: Uracil-DNA glycosylase (229 aa).

D70 (proton acceptor) is an active-site residue.

It belongs to the uracil-DNA glycosylase (UDG) superfamily. UNG family.

The protein localises to the cytoplasm. The enzyme catalyses Hydrolyzes single-stranded DNA or mismatched double-stranded DNA and polynucleotides, releasing free uracil.. Excises uracil residues from the DNA which can arise as a result of misincorporation of dUMP residues by DNA polymerase or due to deamination of cytosine. In Chlamydia abortus (strain DSM 27085 / S26/3) (Chlamydophila abortus), this protein is Uracil-DNA glycosylase.